The sequence spans 189 residues: Crossover junction endodeoxyribonuclease RuvC (189 aa).

Residues aspartate 9, glutamate 70, and aspartate 143 contribute to the active site. Mg(2+) contacts are provided by aspartate 9, glutamate 70, and aspartate 143. The segment covering methionine 162–tryptophan 178 has biased composition (low complexity). Residues methionine 162–arginine 189 form a disordered region. A compositionally biased stretch (basic and acidic residues) spans alanine 179–arginine 189.

Belongs to the RuvC family. In terms of assembly, homodimer which binds Holliday junction (HJ) DNA. The HJ becomes 2-fold symmetrical on binding to RuvC with unstacked arms; it has a different conformation from HJ DNA in complex with RuvA. In the full resolvosome a probable DNA-RuvA(4)-RuvB(12)-RuvC(2) complex forms which resolves the HJ. It depends on Mg(2+) as a cofactor.

The protein localises to the cytoplasm. The enzyme catalyses Endonucleolytic cleavage at a junction such as a reciprocal single-stranded crossover between two homologous DNA duplexes (Holliday junction).. Its function is as follows. The RuvA-RuvB-RuvC complex processes Holliday junction (HJ) DNA during genetic recombination and DNA repair. Endonuclease that resolves HJ intermediates. Cleaves cruciform DNA by making single-stranded nicks across the HJ at symmetrical positions within the homologous arms, yielding a 5'-phosphate and a 3'-hydroxyl group; requires a central core of homology in the junction. The consensus cleavage sequence is 5'-(A/T)TT(C/G)-3'. Cleavage occurs on the 3'-side of the TT dinucleotide at the point of strand exchange. HJ branch migration catalyzed by RuvA-RuvB allows RuvC to scan DNA until it finds its consensus sequence, where it cleaves and resolves the cruciform DNA. The chain is Crossover junction endodeoxyribonuclease RuvC from Paenarthrobacter aurescens (strain TC1).